A 296-amino-acid chain; its full sequence is Phosphatidylserine decarboxylase proenzyme (296 aa).

Active-site charge relay system; for autoendoproteolytic cleavage activity residues include D113, H169, and S256. S256 acts as the Schiff-base intermediate with substrate; via pyruvic acid; for decarboxylase activity in catalysis. S256 bears the Pyruvic acid (Ser); by autocatalysis mark.

This sequence belongs to the phosphatidylserine decarboxylase family. PSD-B subfamily. Prokaryotic type II sub-subfamily. Heterodimer of a large membrane-associated beta subunit and a small pyruvoyl-containing alpha subunit. Pyruvate serves as cofactor. Post-translationally, is synthesized initially as an inactive proenzyme. Formation of the active enzyme involves a self-maturation process in which the active site pyruvoyl group is generated from an internal serine residue via an autocatalytic post-translational modification. Two non-identical subunits are generated from the proenzyme in this reaction, and the pyruvate is formed at the N-terminus of the alpha chain, which is derived from the carboxyl end of the proenzyme. The autoendoproteolytic cleavage occurs by a canonical serine protease mechanism, in which the side chain hydroxyl group of the serine supplies its oxygen atom to form the C-terminus of the beta chain, while the remainder of the serine residue undergoes an oxidative deamination to produce ammonia and the pyruvoyl prosthetic group on the alpha chain. During this reaction, the Ser that is part of the protease active site of the proenzyme becomes the pyruvoyl prosthetic group, which constitutes an essential element of the active site of the mature decarboxylase.

It localises to the cell membrane. It catalyses the reaction a 1,2-diacyl-sn-glycero-3-phospho-L-serine + H(+) = a 1,2-diacyl-sn-glycero-3-phosphoethanolamine + CO2. Its pathway is phospholipid metabolism; phosphatidylethanolamine biosynthesis; phosphatidylethanolamine from CDP-diacylglycerol: step 2/2. Its function is as follows. Catalyzes the formation of phosphatidylethanolamine (PtdEtn) from phosphatidylserine (PtdSer). This Clostridium botulinum (strain Eklund 17B / Type B) protein is Phosphatidylserine decarboxylase proenzyme.